A 661-amino-acid chain; its full sequence is MMGMALELSVLGRSVIDSKTLNLKRYGQKSKLSGRFLPRAELHCPVALSSSKHSNLSFRFRRSCEFSYRSRFMLFSSSQCHEGSQRKSDSGEKELESIKVLLKRGIVIGALVCGVFLYGCQKVLASAGVVEAGYEVFGQSVVLFKNALPKIYQVLTVLREQGLILAALLSLSAFFSMAETSITTLWPWKVRELAEKEPENGVFRMLRSDVTRFLTTILIGTTVVNIAATALVTEAATAIFGEAGVSAATGLMTVAILLLTEITPKSVAVHNAQEVARIVVRPVAWLSLVLYPVGRIVTYLSMGILKILGLKGRSEPYVTEDELKLMLRGAELSGAIEEEEQDMIENVLEIKDTHVREVMTPLVDVVAIDASASLVDFHSMWVTHQYSRVPVFEQRIDNIVGIAYAMDLLDYVQKGDLLESTSVGDMAHKPAYFVPDSMSVWNLLREFRIRKVHMAVVLNEYGGTIGIVTLEDVVEEIVGEIFDENDSKEEIQKKTGYIVMRDEGIYDVDANTSIDQLSEELNMKMPEGIQYETVSGFVCEAFGYIPKTGESVKVVLEKESWEEDGEEEEGKQERQEPKEKNQIYRVEILAGNARKVSAVRFERVNDMDQVSEASDVKSMVPKFVRKWSSEEDDGNLSNEEDQSENAVLDEHVLADNSKKQQ.

A chloroplast-targeting transit peptide spans 1–71 (MMGMALELSV…RSCEFSYRSR (71 aa)). The next 5 helical transmembrane spans lie at 105–125 (GIVI…KVLA), 162–182 (GLIL…ETSI), 213–233 (FLTT…ALVT), 239–259 (IFGE…ILLL), and 285–305 (WLSL…MGIL). A CNNM transmembrane domain is found at 154-340 (VLTVLREQGL…ELSGAIEEEE (187 aa)). CBS domains are found at residues 359-420 (MTPL…LLES) and 426-484 (MAHK…IFDE). Disordered stretches follow at residues 559–578 (ESWE…QEPK) and 628–661 (SSEE…KKQQ). 2 stretches are compositionally biased toward acidic residues: residues 560–570 (SWEEDGEEEEG) and 630–643 (EEDD…EDQS). The segment covering 648 to 661 (LDEHVLADNSKKQQ) has biased composition (basic and acidic residues).

The protein localises to the plastid. It is found in the chloroplast membrane. In Arabidopsis thaliana (Mouse-ear cress), this protein is Putative DUF21 domain-containing protein At3g13070, chloroplastic (CBSDUFCH1).